A 215-amino-acid chain; its full sequence is Urease accessory protein UreG (215 aa).

15–22 (GPVGSGKT) serves as a coordination point for GTP.

The protein belongs to the SIMIBI class G3E GTPase family. UreG subfamily. In terms of assembly, homodimer. UreD, UreF and UreG form a complex that acts as a GTP-hydrolysis-dependent molecular chaperone, activating the urease apoprotein by helping to assemble the nickel containing metallocenter of UreC. The UreE protein probably delivers the nickel.

Its subcellular location is the cytoplasm. Facilitates the functional incorporation of the urease nickel metallocenter. This process requires GTP hydrolysis, probably effectuated by UreG. The polypeptide is Urease accessory protein UreG (Alcanivorax borkumensis (strain ATCC 700651 / DSM 11573 / NCIMB 13689 / SK2)).